Reading from the N-terminus, the 152-residue chain is Transcriptional regulator MraZ (152 aa).

SpoVT-AbrB domains lie at 7–54 (INSI…TMDE) and 83–126 (ASEM…SQEA).

Belongs to the MraZ family. In terms of assembly, forms oligomers.

It is found in the cytoplasm. Its subcellular location is the nucleoid. The chain is Transcriptional regulator MraZ from Hydrogenovibrio crunogenus (strain DSM 25203 / XCL-2) (Thiomicrospira crunogena).